The primary structure comprises 517 residues: Cytochrome P450 monooxygenase 124 (517 aa).

A helical membrane pass occupies residues 3-23 (SLLVLFVSLLALGALKKHLDF). Cysteine 453 provides a ligand contact to heme.

It belongs to the cytochrome P450 family. It depends on heme as a cofactor.

It is found in the membrane. It functions in the pathway secondary metabolite biosynthesis. In terms of biological role, cytochrome P450 monooxygenase that is able to use trans-stilbene as a substrate for oxidation. The protein is Cytochrome P450 monooxygenase 124 of Postia placenta (strain ATCC 44394 / Madison 698-R) (Brown rot fungus).